Consider the following 786-residue polypeptide: Zinc finger transcription factor YRM1 (786 aa).

Positions 1–25 (MSKRGSLQDRASPSEETVKKAQKRR) are disordered. The segment at residues 31-59 (CAFCRKRKLRCDQQKPMCSTCKTRGRSGC) is a DNA-binding region (zn(2)-C6 fungal-type). The disordered stretch occupies residues 721-747 (PLAGNSPGLPPEEVRNNSENASHNNET). Residues 737–747 (NSENASHNNET) are compositionally biased toward polar residues.

It is found in the cytoplasm. It localises to the nucleus. Functionally, transcription factor involved in the regulation of multidrug resistance genes. Acts in concert with YRR1. This chain is Zinc finger transcription factor YRM1 (YRM1), found in Saccharomyces cerevisiae (strain ATCC 204508 / S288c) (Baker's yeast).